The primary structure comprises 132 residues: Small ribosomal subunit protein uS11 (132 aa).

A compositionally biased stretch (basic residues) spans 1 to 16 (MAAGMKGKRSRRRKER). The disordered stretch occupies residues 1–20 (MAAGMKGKRSRRRKERKNVE).

It belongs to the universal ribosomal protein uS11 family. In terms of assembly, part of the 30S ribosomal subunit. Interacts with proteins S7 and S18. Binds to IF-3.

Located on the platform of the 30S subunit, it bridges several disparate RNA helices of the 16S rRNA. Forms part of the Shine-Dalgarno cleft in the 70S ribosome. The sequence is that of Small ribosomal subunit protein uS11 from Clostridium botulinum (strain Loch Maree / Type A3).